Reading from the N-terminus, the 230-residue chain is Cytidylate kinase (230 aa).

Residue 12-20 participates in ATP binding; the sequence is GPSGAGKGT.

Belongs to the cytidylate kinase family. Type 1 subfamily.

It is found in the cytoplasm. The catalysed reaction is CMP + ATP = CDP + ADP. It carries out the reaction dCMP + ATP = dCDP + ADP. The protein is Cytidylate kinase of Shewanella baltica (strain OS223).